Consider the following 379-residue polypeptide: Chaperone protein DnaJ (379 aa).

One can recognise a J domain in the interval 5 to 70; sequence DYYEILGVPK…QKRAAYDQYG (66 aa). A CR-type zinc finger spans residues 134 to 212; that stretch reads GVTKEIRIPT…CHGHGRIEKT (79 aa). Residues Cys147, Cys150, Cys164, Cys167, Cys186, Cys189, Cys200, and Cys203 each coordinate Zn(2+). 4 CXXCXGXG motif repeats span residues 147–154, 164–171, 186–193, and 200–207; these read CEVCHGSG, CPTCHGAG, CPHCQGRG, and CNSCHGHG.

The protein belongs to the DnaJ family. As to quaternary structure, homodimer. Requires Zn(2+) as cofactor.

The protein resides in the cytoplasm. Participates actively in the response to hyperosmotic and heat shock by preventing the aggregation of stress-denatured proteins and by disaggregating proteins, also in an autonomous, DnaK-independent fashion. Unfolded proteins bind initially to DnaJ; upon interaction with the DnaJ-bound protein, DnaK hydrolyzes its bound ATP, resulting in the formation of a stable complex. GrpE releases ADP from DnaK; ATP binding to DnaK triggers the release of the substrate protein, thus completing the reaction cycle. Several rounds of ATP-dependent interactions between DnaJ, DnaK and GrpE are required for fully efficient folding. Also involved, together with DnaK and GrpE, in the DNA replication of plasmids through activation of initiation proteins. The sequence is that of Chaperone protein DnaJ from Cronobacter sakazakii (strain ATCC BAA-894) (Enterobacter sakazakii).